The sequence spans 2560 residues: Plipastatin synthase subunit B (2560 aa).

The condensation 1 stretch occupies residues 7–310 (IQDIYPLSHM…NTVPVRIRSA (304 aa)). Residues 7-1042 (IQDIYPLSHM…AVKLMSLKEH (1036 aa)) form a domain 1 (tyrosine-activating) region. An adenylation 1 region spans residues 496–889 (TYRQLQVRAN…QAPGVKEAAV (394 aa)). The 76-residue stretch at 965-1040 (APRTLIEADL…SMAVKLMSLK (76 aa)) folds into the Carrier 1 domain. S1000 carries the post-translational modification O-(pantetheine 4'-phosphoryl)serine. Residues 1052–1342 (QRDVYPLSFS…NTLAMRSKPE (291 aa)) are condensation 2. The domain 2 (D-allo-threonine-activating) stretch occupies residues 1052–2553 (QRDVYPLSFS…DLTLDELSEI (1502 aa)). Positions 1527–1927 (TYRDLNEKAE…QYPMIKEAAV (401 aa)) are adenylation 2. The Carrier 2 domain maps to 2006–2080 (SPRNEIETVM…ELSARVRKDV (75 aa)). S2041 is modified (O-(pantetheine 4'-phosphoryl)serine). The segment at 2088–2553 (VEGEITWTPI…DLTLDELSEI (466 aa)) is epimerization.

The protein belongs to the ATP-dependent AMP-binding enzyme family. The cofactor is pantetheine 4'-phosphate.

In terms of biological role, this protein is a multifunctional enzyme, able to activate and polymerize the amino acids Tyr and Thr as part of the biosynthesis of the lipopeptide antibiotic plipastatin. The Thr residue is further converted to the D-allo-isomer form. The activation sites for these amino acids consist of individual domains. This Bacillus subtilis (strain 168) protein is Plipastatin synthase subunit B (ppsB).